Here is a 122-residue protein sequence, read N- to C-terminus: MIQTESRLEVADNTGAREVMCIKVLGGSKRRYAGIGDVIKVTVKVAAPRGRVKKGEIYNAVVVRTAKGVRRQDGSLVKFDSNAAVLLNAKLEPIGTRIFGPVTRELRTERFMKIVSLAPEVL.

The protein belongs to the universal ribosomal protein uL14 family. As to quaternary structure, part of the 50S ribosomal subunit. Forms a cluster with proteins L3 and L19. In the 70S ribosome, L14 and L19 interact and together make contacts with the 16S rRNA in bridges B5 and B8.

In terms of biological role, binds to 23S rRNA. Forms part of two intersubunit bridges in the 70S ribosome. The chain is Large ribosomal subunit protein uL14 from Herminiimonas arsenicoxydans.